The sequence spans 349 residues: Homeobox protein engrailed (349 aa).

Disordered stretches follow at residues 26–53 (DGPS…SPLS), 146–210 (GKET…PLPP), 228–252 (PSSG…EKRP), and 327–349 (STIP…ARIE). Composition is skewed to basic and acidic residues over residues 173–188 (QMKK…RTES) and 242–252 (DKAITPDEKRP). Residues 249 to 308 (EKRPRTAFTAEQLSRLKHEFNENRYLTERRRQDLARELGLHENQIKIWFQNNRAKLKKSS) constitute a DNA-binding region (homeobox).

It belongs to the engrailed homeobox family.

The protein resides in the nucleus. The sequence is that of Homeobox protein engrailed from Artemia franciscana (Brine shrimp).